Here is a 216-residue protein sequence, read N- to C-terminus: MIVSTKLQDHFEKITKILSGFGVEGCISYGEITFSIRDQRDIHLILKKLKKEYLFEQLTDVTAVDYLTYGQSDWQVGKVVSQTGFSRGRQQDFKTAAVDNRFEIIYQLLSMANNVRIRVKCKLKDAQIILVDSVSDLWPSANWAEREVYDMFGIYFNNHPDLRRVLTDYGFVGHPLRKDFPQTGYVEMRYDENLGRVVYEPVEIDDRVNTPRVIRN.

Belongs to the complex I 30 kDa subunit family. In terms of assembly, NDH-1 is composed of 14 different subunits. Subunits NuoB, C, D, E, F, and G constitute the peripheral sector of the complex.

Its subcellular location is the cell inner membrane. The catalysed reaction is a quinone + NADH + 5 H(+)(in) = a quinol + NAD(+) + 4 H(+)(out). Functionally, NDH-1 shuttles electrons from NADH, via FMN and iron-sulfur (Fe-S) centers, to quinones in the respiratory chain. The immediate electron acceptor for the enzyme in this species is believed to be ubiquinone. Couples the redox reaction to proton translocation (for every two electrons transferred, four hydrogen ions are translocated across the cytoplasmic membrane), and thus conserves the redox energy in a proton gradient. The sequence is that of NADH-quinone oxidoreductase subunit C from Francisella tularensis subsp. holarctica (strain OSU18).